The following is a 298-amino-acid chain: MDQKQIEEIVRSVMASMGQDVPQPAAPSTQEGAKPQCAAPTVTESCALDLGSAEAKAWIGVENPHRADVLTELRRSTAARVCTGRAGPRPRTQALLRFLADHSRSKDTVLKEVPEEWVKAQGLLEVRSEISDKNLYLTRPDMGRRLSPEAIDALKSQCVMNPDVQVVVSDGLSTDAITANYEEILPPLLAGLKQAGLNVGTPFFVRYGRVKIEDQIGEILGAKVVILLVGERPGLGQSESLSCYAVYSPRVATTVEADRTCISNIHQGGTPPVEAAAVIVDLAKRMLEQKASGINMTR.

A targets protein to the BMC region spans residues 1–19 (MDQKQIEEIVRSVMASMGQ). Positions 210, 231, and 261 each coordinate adenosylcob(III)alamin.

It belongs to the EutC family. As to quaternary structure, the basic unit is a heterodimer which dimerizes to form tetramers. The heterotetramers trimerize; 6 large subunits form a core ring with 6 small subunits projecting outwards. Interacts with EutS, which targets it to the interior of the BMC. Adenosylcob(III)alamin is required as a cofactor.

It is found in the bacterial microcompartment. The catalysed reaction is ethanolamine = acetaldehyde + NH4(+). It functions in the pathway amine and polyamine degradation; ethanolamine degradation. In terms of biological role, catalyzes the deamination of various vicinal amino-alcohols to oxo compounds. It is spontaneously inactivated by its substrate and reactivated by EutA. May play a role in bacterial microcompartment (BMC) assembly or maintenance. Directly targeted to the BMC. Functionally, expression of the eut operon allows this bacteria to use ethanolamine (EA) as a carbon, nitrogen and energy source. It relies on cobalamin (vitamin B12) both as a cofactor for the ethanolamine ammonia-lyase activity and to induce the operon. EA enhances bacterial survival in macrophages in a concentration-dependent manner, suggesting it is an important nutrient during infection. The sequence is that of Ethanolamine ammonia-lyase small subunit from Salmonella typhimurium (strain LT2 / SGSC1412 / ATCC 700720).